The following is a 241-amino-acid chain: Uridylate kinase (241 aa).

ATP is bound by residues 10 to 13 (KLSG), glycine 53, and arginine 57. Residues aspartate 72 and 133–140 (AGSPYFST) each bind UMP. The ATP site is built by asparagine 161, tyrosine 167, and aspartate 170.

Belongs to the UMP kinase family. Homohexamer.

The protein localises to the cytoplasm. It carries out the reaction UMP + ATP = UDP + ADP. The protein operates within pyrimidine metabolism; CTP biosynthesis via de novo pathway; UDP from UMP (UMPK route): step 1/1. With respect to regulation, inhibited by UTP. In terms of biological role, catalyzes the reversible phosphorylation of UMP to UDP. This chain is Uridylate kinase, found in Aster yellows witches'-broom phytoplasma (strain AYWB).